Here is a 293-residue protein sequence, read N- to C-terminus: 4-diphosphocytidyl-2-C-methyl-D-erythritol kinase (293 aa).

Lys-16 is a catalytic residue. 99 to 109 (PMGAGLGGGSS) serves as a coordination point for ATP. The active site involves Asp-141.

It belongs to the GHMP kinase family. IspE subfamily.

It carries out the reaction 4-CDP-2-C-methyl-D-erythritol + ATP = 4-CDP-2-C-methyl-D-erythritol 2-phosphate + ADP + H(+). Its pathway is isoprenoid biosynthesis; isopentenyl diphosphate biosynthesis via DXP pathway; isopentenyl diphosphate from 1-deoxy-D-xylulose 5-phosphate: step 3/6. Its function is as follows. Catalyzes the phosphorylation of the position 2 hydroxy group of 4-diphosphocytidyl-2C-methyl-D-erythritol. The sequence is that of 4-diphosphocytidyl-2-C-methyl-D-erythritol kinase from Burkholderia pseudomallei (strain 668).